The chain runs to 685 residues: DNA topoisomerase 4 subunit B (685 aa).

Residues 389 to 400 are compositionally biased toward basic and acidic residues; sequence EAARKAREESRN. The disordered stretch occupies residues 389–427; it reads EAARKAREESRNGKKRKKGESLLSGKLTPAQSRNPKKNE. The Toprim domain maps to 426-540; the sequence is NELYLVEGDS…AGKVYIALPP (115 aa). Residues E432, D505, and D507 each contribute to the Mg(2+) site. Acidic residues-rich tracts occupy residues 644-654 and 673-685; these read GSILDRSEEDT and QTDDTEISLFDIE. Residues 644–685 are disordered; that stretch reads GSILDRSEEDTSAPTGESLLDAEKTKEAEQTDDTEISLFDIE.

This sequence belongs to the type II topoisomerase family. ParE type 1 subfamily. In terms of assembly, heterotetramer composed of ParC and ParE. The cofactor is Mg(2+). Mn(2+) serves as cofactor. It depends on Ca(2+) as a cofactor.

It carries out the reaction ATP-dependent breakage, passage and rejoining of double-stranded DNA.. Its activity is regulated as follows. Pyrrolopyrimidines inhibit both GyrB and its paralog in topoisomerase IV (parE). Topoisomerase IV is essential for chromosome segregation. It relaxes supercoiled DNA. Performs the decatenation events required during the replication of a circular DNA molecule. In Enterococcus faecalis (strain ATCC 700802 / V583), this protein is DNA topoisomerase 4 subunit B.